The primary structure comprises 202 residues: Nitrophorin-3 (202 aa).

Residues 1-23 (MEPYSALLAVTILCLTSTMGVSG) form the signal peptide. 2 disulfides stabilise this stretch: cysteine 25–cysteine 144 and cysteine 62–cysteine 193. Heme is bound at residue histidine 80.

It belongs to the calycin superfamily. Nitrophorin family. As to quaternary structure, interacts weakly with host coagulation factor IX (F9) (inactive and activated) in the presence of Ca(2+). Salivary gland (at protein level).

It localises to the secreted. Heme-based protein that deliver nitric oxide gas (NO) to the victim while feeding, resulting in vasodilation and inhibition of platelet aggregation. Reversibly binds nitric oxide (NO). Also binds tightly to histamine, which is released by the host to induce wound healing. Exhibits weak anticoagulant activity. The chain is Nitrophorin-3 from Rhodnius prolixus (Triatomid bug).